Here is a 301-residue protein sequence, read N- to C-terminus: N-acetylmuramic acid 6-phosphate etherase (301 aa).

In terms of domain architecture, SIS spans 57-220; that stretch reads TYEKMLFGGR…STSLMIKKGK (164 aa). Catalysis depends on Glu-85, which acts as the Proton donor. Glu-116 is an active-site residue.

This sequence belongs to the GCKR-like family. MurNAc-6-P etherase subfamily. Homodimer.

The enzyme catalyses N-acetyl-D-muramate 6-phosphate + H2O = N-acetyl-D-glucosamine 6-phosphate + (R)-lactate. It participates in amino-sugar metabolism; N-acetylmuramate degradation. In terms of biological role, specifically catalyzes the cleavage of the D-lactyl ether substituent of MurNAc 6-phosphate, producing GlcNAc 6-phosphate and D-lactate. The chain is N-acetylmuramic acid 6-phosphate etherase from Clostridium botulinum (strain Eklund 17B / Type B).